The sequence spans 187 residues: Threonylcarbamoyl-AMP synthase (187 aa).

The YrdC-like domain occupies 4 to 187; the sequence is TLDLDRAVAT…DARSGQILRD (184 aa).

This sequence belongs to the SUA5 family. TsaC subfamily.

The protein resides in the cytoplasm. It carries out the reaction L-threonine + hydrogencarbonate + ATP = L-threonylcarbamoyladenylate + diphosphate + H2O. Functionally, required for the formation of a threonylcarbamoyl group on adenosine at position 37 (t(6)A37) in tRNAs that read codons beginning with adenine. Catalyzes the conversion of L-threonine, HCO(3)(-)/CO(2) and ATP to give threonylcarbamoyl-AMP (TC-AMP) as the acyladenylate intermediate, with the release of diphosphate. The polypeptide is Threonylcarbamoyl-AMP synthase (Xanthomonas euvesicatoria pv. vesicatoria (strain 85-10) (Xanthomonas campestris pv. vesicatoria)).